The chain runs to 179 residues: Diphosphoinositol polyphosphate phosphohydrolase 2 (179 aa).

Residues arginine 9, 17–19 (KKR), and 38–40 (SSR) each bind substrate. Positions 17–143 (KKRAACLCFR…VHAEYLEKLK (127 aa)) constitute a Nudix hydrolase domain. Mg(2+)-binding residues include glycine 49 and glutamate 65. Positions 50–71 (GGMEPEEEPGGAAVREVYEEAG) match the Nudix box motif. The Proton acceptor role is filled by glutamate 68. Glutamate 69 contributes to the Mg(2+) binding site. Substrate contacts are provided by residues 88–90 (RKH), arginine 114, and lysine 132.

It belongs to the Nudix hydrolase family. DIPP subfamily. The cofactor is Mg(2+). Mn(2+) serves as cofactor.

The protein localises to the cytoplasm. It catalyses the reaction diphospho-myo-inositol polyphosphate + H2O = myo-inositol polyphosphate + phosphate.. It carries out the reaction 5-diphospho-1D-myo-inositol 1,2,3,4,6-pentakisphosphate + H2O = 1D-myo-inositol hexakisphosphate + phosphate + H(+). The enzyme catalyses 3,5-bis(diphospho)-1D-myo-inositol 1,2,4,6-tetrakisphosphate + H2O = 3-diphospho-1D-myo-inositol 1,2,4,5,6-pentakisphosphate + phosphate + 2 H(+). The catalysed reaction is 5-diphospho-1D-myo-inositol 1,3,4,6-tetrakisphosphate + H2O = 1D-myo-inositol 1,3,4,5,6-pentakisphosphate + phosphate + H(+). It catalyses the reaction P(1),P(6)-bis(5'-adenosyl) hexaphosphate + H2O = 2 ATP + 2 H(+). It carries out the reaction P(1),P(5)-bis(5'-adenosyl) pentaphosphate + H2O = ADP + ATP + 2 H(+). The enzyme catalyses 5-phospho-alpha-D-ribose 1-diphosphate + H2O = alpha-D-ribose 1,5-bisphosphate + phosphate + H(+). Its function is as follows. Cleaves the beta-phosphate from diphosphoinositol polyphosphates such as PP-InsP5 (diphosphoinositol pentakisphosphate), PP-InsP4 (diphosphoinositol tetrakisphosphate) and [PP]2-InsP4 (bisdiphosphoinositol tetrakisphosphate), suggesting that it may play a role in signal transduction. Diadenosine polyphosphates, particularly Ap6A (P(1),P(6)-bis(5a-adenosyl) hexaphosphate) and Ap5A (P(1),P(5)-bis(5'-adenosyl) pentaphosphate) are downstream effectors of a signaling cascade that regulates cardiac KATP channels, can also be substrates, although with lower preference than the diphosphoinositol polyphosphates. Can also catalyze the hydrolysis of 5-phosphoribose 1-diphosphate, generating the glycolytic activator ribose 1,5-bisphosphate. Does not play a role in U8 snoRNA decapping activity. Binds U8 snoRNA. This Mus musculus (Mouse) protein is Diphosphoinositol polyphosphate phosphohydrolase 2.